Here is a 354-residue protein sequence, read N- to C-terminus: MSKVKSITRESWILSTFPEWGSWLNEEIEQEQVAPGTFAMWWLGCTGIWLKSEGGTNVCVDFWCDTGKQSHGNPLMKQGHQMQRMAGVKKLQPNLRTNPFVLDPFAIRQIDAVLANHDHNDHIDVNVAAAVMQNCADDVPFIGPKTCVDLWIGWGVPKERCIVVKPGDVVKVKDIEIHALDAFDRTALITLPADQKAAGILPDGMDDRAVNYLFKTPGGSLYHSGDSHYSNYYAKHGNEHQIDVALGSYGENPRGITDKMTSADMLRMGEALNAKVVIPFHHDIWSNFQADPQEIRVLWEMKKDRLKYGFKPFIWQVGGKFTWPLDKDNFEYHYPRGFDDCFTIEPDLPFKSFL.

It belongs to the UlaG family. A divalent metal cation serves as cofactor.

The protein resides in the cytoplasm. The catalysed reaction is L-ascorbate 6-phosphate + H2O = 3-dehydro-L-gulonate 6-phosphate. Its pathway is cofactor degradation; L-ascorbate degradation; D-xylulose 5-phosphate from L-ascorbate: step 1/4. Functionally, probably catalyzes the hydrolysis of L-ascorbate-6-P into 3-keto-L-gulonate-6-P. Is essential for L-ascorbate utilization under anaerobic conditions. The protein is Probable L-ascorbate-6-phosphate lactonase UlaG of Shigella dysenteriae serotype 1 (strain Sd197).